Here is a 480-residue protein sequence, read N- to C-terminus: Ochratoxinase (480 aa).

Zn(2+)-binding residues include His-111, His-113, Lys-246, His-287, and His-307. Lys-246 is an active-site residue. Asp-378 is a catalytic residue.

It belongs to the metallo-dependent hydrolases superfamily. Ochratoxinase amidase 2 family. As to quaternary structure, homooctamer. Zn(2+) serves as cofactor.

It is found in the secreted. It catalyses the reaction ochratoxin A + H2O = ochratoxin alpha + L-phenylalanine. Its activity is regulated as follows. The Zn(2+)-specific chelator 1,10-phenanthroline inhibits the enzyme activity. Functionally, carboxypeptidase that catalyzes the release of a C-terminal amino acid with specific catalytic activity for aromatic amino acids such as phenylalanine. Is able to degrade ochratoxin A, one of the five major mycotoxins most harmful to humans and animals that is produced by Aspergillus and Penicillium species and occurs in a wide range of agricultural products. This chain is Ochratoxinase, found in Aspergillus niger (strain ATCC MYA-4892 / CBS 513.88 / FGSC A1513).